A 252-amino-acid chain; its full sequence is 5-oxoprolinase subunit A 1 (252 aa).

Belongs to the LamB/PxpA family. In terms of assembly, forms a complex composed of PxpA, PxpB and PxpC.

It catalyses the reaction 5-oxo-L-proline + ATP + 2 H2O = L-glutamate + ADP + phosphate + H(+). In terms of biological role, catalyzes the cleavage of 5-oxoproline to form L-glutamate coupled to the hydrolysis of ATP to ADP and inorganic phosphate. The sequence is that of 5-oxoprolinase subunit A 1 from Bordetella bronchiseptica (strain ATCC BAA-588 / NCTC 13252 / RB50) (Alcaligenes bronchisepticus).